A 304-amino-acid chain; its full sequence is Taste receptor type 2 member 4 (304 aa).

At 1–10 (MLWELYAFVF) the chain is on the extracellular side. A helical membrane pass occupies residues 11–31 (AASVVFNFVGIVANLFIIVII). Over 32–46 (SKTWVKSHKISSSDK) the chain is Cytoplasmic. A helical membrane pass occupies residues 47–67 (ILFSLAITRFLTLGLFLLNTV). Over 68–80 (YIATNTGRSVYFS) the chain is Extracellular. The helical transmembrane segment at 81–101 (TFFLLCWKFLDSNSLWLVTFL) threads the bilayer. The Cytoplasmic segment spans residues 102–128 (NCLYCVKITHFQHPVFLLLKRTVSMKT). Residues 129 to 149 (TSLLLACLLISAFTTLLYFVL) traverse the membrane as a helical segment. At 150 to 171 (TQISRFPEHIIGRNDTLFDVSD) the chain is on the extracellular side. N163 is a glycosylation site (N-linked (GlcNAc...) asparagine). The helical transmembrane segment at 172–192 (GILTLAASLILSSLLQFLLNV) threads the bilayer. The Cytoplasmic segment spans residues 193–229 (TFASLLIHSLRRHVQKMQRNRSSFWNPQTEAHVGAMR). The chain crosses the membrane as a helical span at residues 230-250 (LMICFLVLYIPYSIAALLYFP). Residues 251–260 (SYMRKNLRAQ) lie on the Extracellular side of the membrane. A helical membrane pass occupies residues 261–281 (AACMIITAAYPPGHSILLIIT). Topologically, residues 282–304 (HHKLKAKAKKICCFYKLRDFVSN) are cytoplasmic.

This sequence belongs to the G-protein coupled receptor T2R family. In terms of tissue distribution, expressed in tongue, stomach and duodenum.

It localises to the membrane. It is found in the cell projection. Its subcellular location is the cilium membrane. Functionally, gustducin-coupled receptor implicated in the perception of bitter compounds in the oral cavity and the gastrointestinal tract. Signals through PLCB2 and the calcium-regulated cation channel TRPM5. In airway epithelial cells, binding of denatonium increases the intracellular calcium ion concentration and stimulates ciliary beat frequency. This chain is Taste receptor type 2 member 4, found in Rattus norvegicus (Rat).